Here is a 396-residue protein sequence, read N- to C-terminus: 8-amino-7-oxononanoate synthase (396 aa).

Substrate is bound at residue arginine 29. Residue 116-117 coordinates pyridoxal 5'-phosphate; the sequence is GY. Histidine 141 is a binding site for substrate. Residues serine 187, histidine 215, and threonine 243 each coordinate pyridoxal 5'-phosphate. Residue lysine 246 is modified to N6-(pyridoxal phosphate)lysine. Position 360 (threonine 360) interacts with substrate.

Belongs to the class-II pyridoxal-phosphate-dependent aminotransferase family. BioF subfamily. In terms of assembly, homodimer. The cofactor is pyridoxal 5'-phosphate.

It catalyses the reaction 6-carboxyhexanoyl-[ACP] + L-alanine + H(+) = (8S)-8-amino-7-oxononanoate + holo-[ACP] + CO2. It participates in cofactor biosynthesis; biotin biosynthesis. Functionally, catalyzes the decarboxylative condensation of pimeloyl-[acyl-carrier protein] and L-alanine to produce 8-amino-7-oxononanoate (AON), [acyl-carrier protein], and carbon dioxide. In Nitrosospira multiformis (strain ATCC 25196 / NCIMB 11849 / C 71), this protein is 8-amino-7-oxononanoate synthase.